Consider the following 510-residue polypeptide: NAD(P)H-quinone oxidoreductase subunit 2 B, chloroplastic (510 aa).

13 helical membrane passes run 24–44 (LLLF…GLIL), 59–79 (WFYF…LFRW), 99–119 (IFQF…VEYI), 124–144 (MAIT…MFLC), 150–170 (ITIF…SGYT), 184–204 (LLMG…LYGL), 229–249 (ISIA…LAPF), 295–315 (WHLL…LIAI), 323–343 (MLAY…IVGD), 354–374 (YMLF…LFGL), 395–415 (ALSL…AGFF), 418–438 (LHLF…IGLL), and 484–504 (MIVC…ILAI).

This sequence belongs to the complex I subunit 2 family. As to quaternary structure, NDH is composed of at least 16 different subunits, 5 of which are encoded in the nucleus.

The protein resides in the plastid. Its subcellular location is the chloroplast thylakoid membrane. The enzyme catalyses a plastoquinone + NADH + (n+1) H(+)(in) = a plastoquinol + NAD(+) + n H(+)(out). The catalysed reaction is a plastoquinone + NADPH + (n+1) H(+)(in) = a plastoquinol + NADP(+) + n H(+)(out). Functionally, NDH shuttles electrons from NAD(P)H:plastoquinone, via FMN and iron-sulfur (Fe-S) centers, to quinones in the photosynthetic chain and possibly in a chloroplast respiratory chain. The immediate electron acceptor for the enzyme in this species is believed to be plastoquinone. Couples the redox reaction to proton translocation, and thus conserves the redox energy in a proton gradient. The sequence is that of NAD(P)H-quinone oxidoreductase subunit 2 B, chloroplastic from Acorus calamus (Sweet flag).